An 86-amino-acid polypeptide reads, in one-letter code: SEED MATURATION PROTEIN 1 (86 aa).

The segment at 52–86 is disordered; sequence RIEKGKEQSAASGDQTQIQRDIKDIKGTRTDDSPR. The span at 60–70 shows a compositional bias: polar residues; the sequence is SAASGDQTQIQ. Over residues 71–86 the composition is skewed to basic and acidic residues; it reads RDIKDIKGTRTDDSPR.

This sequence belongs to the LEA type 3 family.

Protein chaperone involved in seed maturation and dormancy maintenance after high temperature fluctuation (e.g. secondary dormancy after 3 days at 40 degrees Celsius), probably by protecting heat labile proteins required for secondary dormancy (e.g. G6PDH, HOP3, SR45, ECP63, SCL33, RPL32B, ChlADR1, MSBP1, MBF1B, At3g01690, At1g15280, At1g15290, At2g31410, At1g11630, At1g65090, EMB2279, EMB1674 and RPL35C). The chain is SEED MATURATION PROTEIN 1 from Arabidopsis thaliana (Mouse-ear cress).